We begin with the raw amino-acid sequence, 234 residues long: MFNSQAAVASKIIVALDVPNLEVAIATIHRLPQVQFWKVGLELFCASGPMILDVLKDQGKRIFLDLKLHDIPNTVAAAARAIAPYGVDFVTIHTATGLTGLKTAQAALGESATQLIGVTLLTSIGADTLQQELQIPLDPATYVECMANLAHQAGLAGIVCSPQEAARVKQRWGENFLRICPGIRPLGSATGDQARSLTPNAAFAAGASYLVIGRPILQAADPAAAFDDLCSSLV.

Residues Asp17, Lys38, 65–74, Thr122, Arg184, Gln193, Gly213, and Arg214 each bind substrate; that span reads DLKLHDIPNT. Catalysis depends on Lys67, which acts as the Proton donor.

This sequence belongs to the OMP decarboxylase family. Type 1 subfamily. In terms of assembly, homodimer.

The enzyme catalyses orotidine 5'-phosphate + H(+) = UMP + CO2. It functions in the pathway pyrimidine metabolism; UMP biosynthesis via de novo pathway; UMP from orotate: step 2/2. Catalyzes the decarboxylation of orotidine 5'-monophosphate (OMP) to uridine 5'-monophosphate (UMP). The chain is Orotidine 5'-phosphate decarboxylase from Thermosynechococcus vestitus (strain NIES-2133 / IAM M-273 / BP-1).